We begin with the raw amino-acid sequence, 413 residues long: uncharacterized protein (413 aa).

Lys-265 bears the N6-(pyridoxal phosphate)lysine mark.

It belongs to the threonine aldolase family. Pyridoxal 5'-phosphate is required as a cofactor.

This is an uncharacterized protein from Caenorhabditis elegans.